The sequence spans 186 residues: Mating-type-like protein ALPHA2 (186 aa).

The segment at residues 108 to 170 is a DNA-binding region (homeobox; TALE-type); the sequence is ASYRGHRFTR…NRRRKQKSIY (63 aa).

The protein belongs to the TALE/M-ATYP homeobox family.

It is found in the nucleus. In terms of biological role, mating type proteins are sequence specific DNA-binding proteins that act as master switches in yeast differentiation by controlling gene expression in a cell type-specific fashion. This chain is Mating-type-like protein ALPHA2 (MTL1ALPHA2), found in Candida glabrata (strain ATCC 2001 / BCRC 20586 / JCM 3761 / NBRC 0622 / NRRL Y-65 / CBS 138) (Yeast).